The sequence spans 417 residues: Phosphoribosylamine--glycine ligase (417 aa).

Positions 107–313 (KQIMAKYEIP…FLEIIEATLE (207 aa)) constitute an ATP-grasp domain. ATP is bound at residue 133–194 (LKETWYPVVI…EEMLYGKEAS (62 aa)). Mg(2+) is bound by residues Glu-283 and Asn-285.

It belongs to the GARS family. It depends on Mg(2+) as a cofactor. Mn(2+) serves as cofactor.

The catalysed reaction is 5-phospho-beta-D-ribosylamine + glycine + ATP = N(1)-(5-phospho-beta-D-ribosyl)glycinamide + ADP + phosphate + H(+). It functions in the pathway purine metabolism; IMP biosynthesis via de novo pathway; N(1)-(5-phospho-D-ribosyl)glycinamide from 5-phospho-alpha-D-ribose 1-diphosphate: step 2/2. The chain is Phosphoribosylamine--glycine ligase from Caldanaerobacter subterraneus subsp. tengcongensis (strain DSM 15242 / JCM 11007 / NBRC 100824 / MB4) (Thermoanaerobacter tengcongensis).